Consider the following 782-residue polypeptide: Nezukol synthase KSL3 (782 aa).

4 residues coordinate Mg(2+): Asp529, Asp533, Asn677, and Glu685. The DDXXD motif signature appears at 529 to 533 (DDVFD).

It belongs to the terpene synthase family. The cofactor is Mg(2+). Highly expressed in leaves, and, at low levels, in stems, but barely in roots and flowers.

It catalyses the reaction (+)-copalyl diphosphate = miltiradiene + diphosphate. It carries out the reaction (+)-copalyl diphosphate + H2O = nezukol + diphosphate. It participates in secondary metabolite biosynthesis; terpenoid biosynthesis. In terms of biological role, involved in the biosynthesis of ent-kaurene diterpenoids natural products such as oridonin, miltiradiene, eriocalyxin B and nezukol, known to exhibit antitumor, anti-inflammatory and antibacterial activities. Catalyzes the conversion of (+)-copalyl diphosphate ((+)-CPP) to nezukol and miltiradiene. The reaction mechanism proceeds via the ionization of the diphosphate group of (+)-CPP, followed by formation of an intermediary pimar-15-en-8-yl(+) carbocation and neutralization of the carbocation by water capture at C-8 to yield nezukol. Can interact with ent-copalyl diphosphate (ent-CPP) but seems unable to use it as substrate. The chain is Nezukol synthase KSL3 from Isodon rubescens (Rabdosia rubescens).